The sequence spans 95 residues: Aspartyl/glutamyl-tRNA(Asn/Gln) amidotransferase subunit C (95 aa).

The protein belongs to the GatC family. As to quaternary structure, heterotrimer of A, B and C subunits.

The enzyme catalyses L-glutamyl-tRNA(Gln) + L-glutamine + ATP + H2O = L-glutaminyl-tRNA(Gln) + L-glutamate + ADP + phosphate + H(+). It catalyses the reaction L-aspartyl-tRNA(Asn) + L-glutamine + ATP + H2O = L-asparaginyl-tRNA(Asn) + L-glutamate + ADP + phosphate + 2 H(+). In terms of biological role, allows the formation of correctly charged Asn-tRNA(Asn) or Gln-tRNA(Gln) through the transamidation of misacylated Asp-tRNA(Asn) or Glu-tRNA(Gln) in organisms which lack either or both of asparaginyl-tRNA or glutaminyl-tRNA synthetases. The reaction takes place in the presence of glutamine and ATP through an activated phospho-Asp-tRNA(Asn) or phospho-Glu-tRNA(Gln). The polypeptide is Aspartyl/glutamyl-tRNA(Asn/Gln) amidotransferase subunit C (Campylobacter fetus subsp. fetus (strain 82-40)).